The following is a 461-amino-acid chain: ATP-dependent protease ATPase subunit HslU (461 aa).

ATP-binding positions include I18 and 60 to 65; that span reads GVGKTE. Residues 157–178 are disordered; it reads EGSSVKPEPTAQQKESRQKMRK. ATP contacts are provided by D273, E339, and R411.

It belongs to the ClpX chaperone family. HslU subfamily. In terms of assembly, a double ring-shaped homohexamer of HslV is capped on each side by a ring-shaped HslU homohexamer. The assembly of the HslU/HslV complex is dependent on binding of ATP.

It localises to the cytoplasm. ATPase subunit of a proteasome-like degradation complex; this subunit has chaperone activity. The binding of ATP and its subsequent hydrolysis by HslU are essential for unfolding of protein substrates subsequently hydrolyzed by HslV. HslU recognizes the N-terminal part of its protein substrates and unfolds these before they are guided to HslV for hydrolysis. The protein is ATP-dependent protease ATPase subunit HslU of Magnetococcus marinus (strain ATCC BAA-1437 / JCM 17883 / MC-1).